The sequence spans 480 residues: Proline--tRNA ligase (480 aa).

This sequence belongs to the class-II aminoacyl-tRNA synthetase family. ProS type 3 subfamily. As to quaternary structure, homodimer.

The protein resides in the cytoplasm. It catalyses the reaction tRNA(Pro) + L-proline + ATP = L-prolyl-tRNA(Pro) + AMP + diphosphate. Functionally, catalyzes the attachment of proline to tRNA(Pro) in a two-step reaction: proline is first activated by ATP to form Pro-AMP and then transferred to the acceptor end of tRNA(Pro). The polypeptide is Proline--tRNA ligase (Roseiflexus sp. (strain RS-1)).